The primary structure comprises 65 residues: Alpha-conotoxin Mr1.1 (65 aa).

Residues 1 to 21 (MGMRMMFTVFLLVVLATTVVS) form the signal peptide. A propeptide spanning residues 22 to 48 (FTSDRASDGRKAAAKDKASDLVALTVK) is cleaved from the precursor. Intrachain disulfides connect Cys50–Cys56 and Cys51–Cys64. Residues 52–54 (SHP) form a ser-Xaa-Pro motif, crucial for potent interaction with nAChR region. Cys64 is modified (cysteine amide).

The protein belongs to the conotoxin A superfamily. In terms of tissue distribution, expressed by the venom duct.

It localises to the secreted. Its function is as follows. Alpha-conotoxins act on postsynaptic membranes, they bind to the nicotinic acetylcholine receptors (nAChR) and thus inhibit them. This toxin potently and reversibly inhibits alpha-9-alpha-10/CHRNA9-CHRNA10 (IC(50)=92 nM (human) and IC(50)=8.3 nM (rat)) and human alpha3-beta-2/CHRNA3-CHRNB2 nAChR (IC(50)=218.9 nM). Also moderately inhibits human alpha-3-beta-4/CHRNA3-CHRNB4 (60% inhibition at 1 uM), rat alpha-7/CHRNA7 (65% inhibition at 1 uM) and rat alpha-3-beta-2/CHRNA3-CHRNB2 nAChR (50-70% inhibition at 10 uM). In two rat pain models, this toxin shows analgesic effect. This is Alpha-conotoxin Mr1.1 from Conus marmoreus (Marble cone).